A 239-amino-acid chain; its full sequence is Pimeloyl-[acyl-carrier protein] methyl ester esterase (239 aa).

Substrate is bound by residues Trp20, 77 to 78 (SM), and 138 to 142 (FISLQ). Ser77 functions as the Nucleophile in the catalytic mechanism. Residues Asp192 and His220 contribute to the active site. Residue His220 participates in substrate binding.

The protein belongs to the AB hydrolase superfamily. Carboxylesterase BioH family. As to quaternary structure, monomer.

The protein resides in the cytoplasm. The enzyme catalyses 6-carboxyhexanoyl-[ACP] methyl ester + H2O = 6-carboxyhexanoyl-[ACP] + methanol + H(+). Its pathway is cofactor biosynthesis; biotin biosynthesis. Functionally, the physiological role of BioH is to remove the methyl group introduced by BioC when the pimeloyl moiety is complete. It allows to synthesize pimeloyl-ACP via the fatty acid synthetic pathway through the hydrolysis of the ester bonds of pimeloyl-ACP esters. This Legionella pneumophila (strain Lens) protein is Pimeloyl-[acyl-carrier protein] methyl ester esterase.